The following is an 843-amino-acid chain: Protein P (843 aa).

Residues 1–177 (MPLSYQHFRK…FCGSPYSWEQ (177 aa)) form a terminal protein domain (TP) region. The spacer stretch occupies residues 178–346 (DLQHGRLVFQ…YCLCHIVNLI (169 aa)). 2 disordered regions span residues 220-269 (KSRL…HNCA) and 291-316 (TSKGHSSSGHAVELHHFPPNSSRSRS). The tract at residues 347–690 (EDWGPCTEHG…YLNLYPVARQ (344 aa)) is polymerase/reverse transcriptase domain (RT). The Reverse transcriptase domain maps to 357–600 (EHRIRTPRTP…YSLNFMGYVI (244 aa)). Positions 429, 551, and 552 each coordinate Mg(2+).

Belongs to the hepadnaviridae P protein family.

It carries out the reaction DNA(n) + a 2'-deoxyribonucleoside 5'-triphosphate = DNA(n+1) + diphosphate. It catalyses the reaction Endonucleolytic cleavage to 5'-phosphomonoester.. Activated by host HSP70 and HSP40 in vitro to be able to bind the epsilon loop of the pgRNA. Because deletion of the RNase H region renders the protein partly chaperone-independent, the chaperones may be needed indirectly to relieve occlusion of the RNA-binding site by this domain. Inhibited by several reverse-transcriptase inhibitors: Lamivudine, Adefovir and Entecavir. In terms of biological role, multifunctional enzyme that converts the viral RNA genome into dsDNA in viral cytoplasmic capsids. This enzyme displays a DNA polymerase activity that can copy either DNA or RNA templates, and a ribonuclease H (RNase H) activity that cleaves the RNA strand of RNA-DNA heteroduplexes in a partially processive 3'- to 5'-endonucleasic mode. Neo-synthesized pregenomic RNA (pgRNA) are encapsidated together with the P protein, and reverse-transcribed inside the nucleocapsid. Initiation of reverse-transcription occurs first by binding the epsilon loop on the pgRNA genome, and is initiated by protein priming, thereby the 5'-end of (-)DNA is covalently linked to P protein. Partial (+)DNA is synthesized from the (-)DNA template and generates the relaxed circular DNA (RC-DNA) genome. After budding and infection, the RC-DNA migrates in the nucleus, and is converted into a plasmid-like covalently closed circular DNA (cccDNA). The activity of P protein does not seem to be necessary for cccDNA generation, and is presumably released from (+)DNA by host nuclear DNA repair machinery. This chain is Protein P, found in Homo sapiens (Human).